Consider the following 216-residue polypeptide: Thymidylate kinase (216 aa).

Residue 10–17 (GVDGSGKT) participates in ATP binding.

It belongs to the thymidylate kinase family.

It catalyses the reaction dTMP + ATP = dTDP + ADP. In terms of biological role, phosphorylation of dTMP to form dTDP in both de novo and salvage pathways of dTTP synthesis. The sequence is that of Thymidylate kinase from Pelotomaculum thermopropionicum (strain DSM 13744 / JCM 10971 / SI).